We begin with the raw amino-acid sequence, 290 residues long: 2-dehydro-3-deoxyphosphooctonate aldolase 1 (290 aa).

A2 is modified (N-acetylalanine).

This sequence belongs to the KdsA family. Expressed in shoots.

The protein localises to the cytoplasm. It carries out the reaction D-arabinose 5-phosphate + phosphoenolpyruvate + H2O = 3-deoxy-alpha-D-manno-2-octulosonate-8-phosphate + phosphate. Its function is as follows. Catalyzes the stereospecific condensation of D-arabinose 5-phosphate and phosphoenolpyruvate to form 3-deoxy-D-manno-octulosonate 8-phosphate (KDO-8-phosphate) and inorganic phosphate. Involved in the biosynthesis of 3-deoxy-D-manno-octulosonate (KDO) which is an indispensable component of rhamnogalacturonan II (RG-II), a structurally complex pectic polysaccharide of the primary cell wall. RG-II is essential for the cell wall integrity of rapidly growing tissues and pollen tube growth and elongation. This Arabidopsis thaliana (Mouse-ear cress) protein is 2-dehydro-3-deoxyphosphooctonate aldolase 1 (KDSA1).